Consider the following 314-residue polypeptide: tRNA pseudouridine synthase B (314 aa).

Position 43 (His43) interacts with substrate. Asp48 functions as the Nucleophile in the catalytic mechanism. Substrate contacts are provided by Tyr76, Tyr179, and Leu200.

This sequence belongs to the pseudouridine synthase TruB family. Type 1 subfamily.

It carries out the reaction uridine(55) in tRNA = pseudouridine(55) in tRNA. In terms of biological role, responsible for synthesis of pseudouridine from uracil-55 in the psi GC loop of transfer RNAs. This Enterobacter sp. (strain 638) protein is tRNA pseudouridine synthase B.